We begin with the raw amino-acid sequence, 257 residues long: Imidazole glycerol phosphate synthase subunit HisF (257 aa).

Residues Asp-11 and Asp-130 contribute to the active site.

Belongs to the HisA/HisF family. As to quaternary structure, heterodimer of HisH and HisF.

Its subcellular location is the cytoplasm. The enzyme catalyses 5-[(5-phospho-1-deoxy-D-ribulos-1-ylimino)methylamino]-1-(5-phospho-beta-D-ribosyl)imidazole-4-carboxamide + L-glutamine = D-erythro-1-(imidazol-4-yl)glycerol 3-phosphate + 5-amino-1-(5-phospho-beta-D-ribosyl)imidazole-4-carboxamide + L-glutamate + H(+). It participates in amino-acid biosynthesis; L-histidine biosynthesis; L-histidine from 5-phospho-alpha-D-ribose 1-diphosphate: step 5/9. In terms of biological role, IGPS catalyzes the conversion of PRFAR and glutamine to IGP, AICAR and glutamate. The HisF subunit catalyzes the cyclization activity that produces IGP and AICAR from PRFAR using the ammonia provided by the HisH subunit. The sequence is that of Imidazole glycerol phosphate synthase subunit HisF from Shewanella loihica (strain ATCC BAA-1088 / PV-4).